The following is a 664-amino-acid chain: Macoilin (664 aa).

Transmembrane regions (helical) follow at residues 28–48 (TFLYLKFLVVWALVLLADFVL), 75–95 (AFSVFFVCVAFTSNIICLLFI), 120–140 (VCLPTVSLWILFVYIEAAIRF), and 154–174 (FAAHCIGYPVVTLGFGFKSYV). Basic and acidic residues predominate over residues 253 to 265 (REKGKEKDKDAKK). The disordered stretch occupies residues 253–274 (REKGKEKDKDAKKHNLGINNNN). Serine 305 is subject to Phosphoserine. The segment covering 320 to 348 (KNYKNASGVVNSSPRSHSATNGSIPSSSS) has biased composition (polar residues). The segment at 320–375 (KNYKNASGVVNSSPRSHSATNGSIPSSSSKNEKKQKCTSKSPSTHKDLMENCIPNN) is disordered. Asparagine 324 is a glycosylation site (N-linked (GlcNAc...) asparagine). A Phosphoserine modification is found at serine 332. Asparagine 340 and asparagine 452 each carry an N-linked (GlcNAc...) asparagine glycan. The disordered stretch occupies residues 630 to 664 (TSPLSPVSPHYSSKFVETSPSGLDPNASVYQPLKK). Phosphoserine is present on residues serine 631 and serine 634. Asparagine 655 is a glycosylation site (N-linked (GlcNAc...) asparagine).

The protein belongs to the macoilin family.

The protein resides in the rough endoplasmic reticulum membrane. The protein localises to the nucleus membrane. In terms of biological role, plays a role in the regulation of neuronal activity. The sequence is that of Macoilin (MACO1) from Macaca mulatta (Rhesus macaque).